The sequence spans 212 residues: Deoxyribose-phosphate aldolase (212 aa).

Aspartate 89 serves as the catalytic Proton donor/acceptor. Residue lysine 151 is the Schiff-base intermediate with acetaldehyde of the active site. Lysine 180 functions as the Proton donor/acceptor in the catalytic mechanism.

The protein belongs to the DeoC/FbaB aldolase family. DeoC type 1 subfamily.

It is found in the cytoplasm. The enzyme catalyses 2-deoxy-D-ribose 5-phosphate = D-glyceraldehyde 3-phosphate + acetaldehyde. The protein operates within carbohydrate degradation; 2-deoxy-D-ribose 1-phosphate degradation; D-glyceraldehyde 3-phosphate and acetaldehyde from 2-deoxy-alpha-D-ribose 1-phosphate: step 2/2. In terms of biological role, catalyzes a reversible aldol reaction between acetaldehyde and D-glyceraldehyde 3-phosphate to generate 2-deoxy-D-ribose 5-phosphate. This chain is Deoxyribose-phosphate aldolase, found in Clostridium botulinum (strain 657 / Type Ba4).